A 356-amino-acid chain; its full sequence is UDP-N-acetylglucosamine--N-acetylmuramyl-(pentapeptide) pyrophosphoryl-undecaprenol N-acetylglucosamine transferase (356 aa).

UDP-N-acetyl-alpha-D-glucosamine contacts are provided by residues 12 to 14 (TGG), Asn-124, Arg-163, Ser-188, Ile-242, and Gln-287.

The protein belongs to the glycosyltransferase 28 family. MurG subfamily.

The protein localises to the cell inner membrane. It catalyses the reaction di-trans,octa-cis-undecaprenyl diphospho-N-acetyl-alpha-D-muramoyl-L-alanyl-D-glutamyl-meso-2,6-diaminopimeloyl-D-alanyl-D-alanine + UDP-N-acetyl-alpha-D-glucosamine = di-trans,octa-cis-undecaprenyl diphospho-[N-acetyl-alpha-D-glucosaminyl-(1-&gt;4)]-N-acetyl-alpha-D-muramoyl-L-alanyl-D-glutamyl-meso-2,6-diaminopimeloyl-D-alanyl-D-alanine + UDP + H(+). It participates in cell wall biogenesis; peptidoglycan biosynthesis. Its function is as follows. Cell wall formation. Catalyzes the transfer of a GlcNAc subunit on undecaprenyl-pyrophosphoryl-MurNAc-pentapeptide (lipid intermediate I) to form undecaprenyl-pyrophosphoryl-MurNAc-(pentapeptide)GlcNAc (lipid intermediate II). In Pseudomonas fluorescens (strain Pf0-1), this protein is UDP-N-acetylglucosamine--N-acetylmuramyl-(pentapeptide) pyrophosphoryl-undecaprenol N-acetylglucosamine transferase.